The following is a 353-amino-acid chain: Polyadenylate-binding protein-interacting protein 10 (353 aa).

The interval methionine 1–arginine 61 is disordered. Residues asparagine 20 to threonine 31 show a composition bias toward low complexity. A PAM2-like motif is present at residues lysine 96–proline 106. Positions alanine 128–serine 159 are disordered. The span at proline 141 to lysine 156 shows a compositional bias: basic residues. The Bipartite nuclear localization signal signature appears at arginine 142–arginine 153. RRM domains follow at residues arginine 169 to threonine 244 and arginine 266 to threonine 341.

Expressed in cauline leaves, stems, rosette leaves, immature siliques and primary inflorescences.

It localises to the nucleus. The chain is Polyadenylate-binding protein-interacting protein 10 (CID10) from Arabidopsis thaliana (Mouse-ear cress).